Reading from the N-terminus, the 491-residue chain is Anthranilate synthase component 1 (491 aa).

Residues S49 and P271–L273 each bind L-tryptophan. G306–T307 provides a ligand contact to chorismate. E333 is a binding site for Mg(2+). Chorismate contacts are provided by residues Y421, R441, G455–G457, and G457. A Mg(2+)-binding site is contributed by E470.

This sequence belongs to the anthranilate synthase component I family. As to quaternary structure, heterotetramer consisting of two non-identical subunits: a beta subunit (TrpG) and a large alpha subunit (TrpE). Mg(2+) serves as cofactor.

The enzyme catalyses chorismate + L-glutamine = anthranilate + pyruvate + L-glutamate + H(+). The protein operates within amino-acid biosynthesis; L-tryptophan biosynthesis; L-tryptophan from chorismate: step 1/5. With respect to regulation, feedback inhibited by tryptophan. Functionally, part of a heterotetrameric complex that catalyzes the two-step biosynthesis of anthranilate, an intermediate in the biosynthesis of L-tryptophan. In the first step, the glutamine-binding beta subunit (TrpG) of anthranilate synthase (AS) provides the glutamine amidotransferase activity which generates ammonia as a substrate that, along with chorismate, is used in the second step, catalyzed by the large alpha subunit of AS (TrpE) to produce anthranilate. In the absence of TrpG, TrpE can synthesize anthranilate directly from chorismate and high concentrations of ammonia. This is Anthranilate synthase component 1 (trpE) from Neisseria meningitidis serogroup A / serotype 4A (strain DSM 15465 / Z2491).